Here is a 233-residue protein sequence, read N- to C-terminus: Large ribosomal subunit protein uL1 (233 aa).

The protein belongs to the universal ribosomal protein uL1 family. Part of the 50S ribosomal subunit.

Functionally, binds directly to 23S rRNA. The L1 stalk is quite mobile in the ribosome, and is involved in E site tRNA release. Its function is as follows. Protein L1 is also a translational repressor protein, it controls the translation of the L11 operon by binding to its mRNA. The protein is Large ribosomal subunit protein uL1 of Shewanella sp. (strain ANA-3).